A 299-amino-acid chain; its full sequence is ATP synthase gamma chain (299 aa).

This sequence belongs to the ATPase gamma chain family. As to quaternary structure, F-type ATPases have 2 components, CF(1) - the catalytic core - and CF(0) - the membrane proton channel. CF(1) has five subunits: alpha(3), beta(3), gamma(1), delta(1), epsilon(1). CF(0) has three main subunits: a, b and c.

The protein localises to the cell membrane. In terms of biological role, produces ATP from ADP in the presence of a proton gradient across the membrane. The gamma chain is believed to be important in regulating ATPase activity and the flow of protons through the CF(0) complex. The protein is ATP synthase gamma chain of Clavibacter michiganensis subsp. michiganensis (strain NCPPB 382).